Reading from the N-terminus, the 861-residue chain is Leucine--tRNA ligase (861 aa).

Positions 42–52 (PYPSGKLHMGH) match the 'HIGH' region motif. The 'KMSKS' region motif lies at 620–624 (KMSKS). Position 623 (Lys-623) interacts with ATP.

It belongs to the class-I aminoacyl-tRNA synthetase family.

It localises to the cytoplasm. It carries out the reaction tRNA(Leu) + L-leucine + ATP = L-leucyl-tRNA(Leu) + AMP + diphosphate. This Buchnera aphidicola subsp. Schizaphis graminum (strain Sg) protein is Leucine--tRNA ligase.